We begin with the raw amino-acid sequence, 181 residues long: Probable cobalt-precorrin-6B C(15)-methyltransferase (decarboxylating) (181 aa).

Residues Thr-16, 40 to 44 (GCGSG), Asp-61, and Ala-89 contribute to the S-adenosyl-L-methionine site.

Belongs to the methyltransferase superfamily. Archaeal-type CbiT family.

The catalysed reaction is Co-precorrin-6B + S-adenosyl-L-methionine = Co-precorrin-7 + S-adenosyl-L-homocysteine + CO2. It functions in the pathway cofactor biosynthesis; adenosylcobalamin biosynthesis; cob(II)yrinate a,c-diamide from sirohydrochlorin (anaerobic route): step 8/10. In terms of biological role, catalyzes the methylation of C-15 in cobalt-precorrin-6B followed by the decarboxylation of C-12 to form cobalt-precorrin-7. The polypeptide is Probable cobalt-precorrin-6B C(15)-methyltransferase (decarboxylating) (Methanococcus maripaludis (strain C7 / ATCC BAA-1331)).